Consider the following 183-residue polypeptide: ATP-dependent protease subunit HslV (183 aa).

The active site involves Thr-13. Na(+) is bound by residues Gly-168, Cys-171, and Thr-174.

This sequence belongs to the peptidase T1B family. HslV subfamily. As to quaternary structure, a double ring-shaped homohexamer of HslV is capped on each side by a ring-shaped HslU homohexamer. The assembly of the HslU/HslV complex is dependent on binding of ATP.

It is found in the cytoplasm. The enzyme catalyses ATP-dependent cleavage of peptide bonds with broad specificity.. Allosterically activated by HslU binding. Functionally, protease subunit of a proteasome-like degradation complex believed to be a general protein degrading machinery. This Xanthomonas oryzae pv. oryzae (strain MAFF 311018) protein is ATP-dependent protease subunit HslV.